A 270-amino-acid chain; its full sequence is Fibroblast growth factor 5 (270 aa).

Positions 1–20 are cleaved as a signal peptide; that stretch reads MSLSLLLLLFLSHLILSAWA. Residues 26 to 84 form a disordered region; sequence LAPKGQPGPAATGRNPGGAGGSSTSGGTTSSSSSSVSSAPGASPGIRGSGSEQGSFQWS. A compositionally biased stretch (gly residues) spans 40-49; the sequence is NPGGAGGSST. The span at 50–70 shows a compositional bias: low complexity; the sequence is SGGTTSSSSSSVSSAPGASPG. Polar residues predominate over residues 75 to 84; that stretch reads GSEQGSFQWS. N112 is a glycosylation site (N-linked (GlcNAc...) asparagine). A disordered region spans residues 237–257; that stretch reads EKKKPPSHVKPKVPLSAPRKS.

It belongs to the heparin-binding growth factors family. Interacts with FGFR1 and FGFR2. Affinity between fibroblast growth factors (FGFs) and their receptors is increased by heparan sulfate glycosaminoglycans that function as coreceptors.

It localises to the secreted. In terms of biological role, plays an important role in the regulation of cell proliferation and cell differentiation. Required for normal regulation of the hair growth cycle. Functions as an inhibitor of hair elongation by promoting progression from anagen, the growth phase of the hair follicle, into catagen the apoptosis-induced regression phase. This chain is Fibroblast growth factor 5 (FGF5), found in Canis lupus familiaris (Dog).